We begin with the raw amino-acid sequence, 287 residues long: Glutamate racemase (287 aa).

Over residues 1–15 (MATKPQDANTTSREA) the composition is skewed to polar residues. The interval 1–25 (MATKPQDANTTSREAITSKADSPPR) is disordered. Residues 32–33 (DS) and 64–65 (YG) contribute to the substrate site. The active-site Proton donor/acceptor is the cysteine 96. Position 97-98 (97-98 (NT)) interacts with substrate. Cysteine 208 functions as the Proton donor/acceptor in the catalytic mechanism. 209–210 (TH) serves as a coordination point for substrate.

This sequence belongs to the aspartate/glutamate racemases family.

The enzyme catalyses L-glutamate = D-glutamate. It participates in cell wall biogenesis; peptidoglycan biosynthesis. Functionally, provides the (R)-glutamate required for cell wall biosynthesis. The chain is Glutamate racemase from Yersinia pseudotuberculosis serotype O:1b (strain IP 31758).